Consider the following 138-residue polypeptide: HTH-type transcriptional regulator CueR (138 aa).

Positions 1–69 (MNISDVAKKT…LEECGELVNL (69 aa)) constitute an HTH merR-type domain. The H-T-H motif DNA-binding region spans 4-23 (SDVAKKTGLTSKAIRFYEEK). Residues Cys-112 and Cys-120 each contribute to the Cu(+) site.

In terms of assembly, homodimer.

The protein localises to the cytoplasm. Regulates the transcription of the copA and cuiD (cueO) genes. Detects cytoplasmic copper stress and activates transcription in response to increasing copper concentrations. This is HTH-type transcriptional regulator CueR (cueR) from Salmonella typhimurium (strain LT2 / SGSC1412 / ATCC 700720).